Here is a 447-residue protein sequence, read N- to C-terminus: Ameloblastin (447 aa).

Residues 1 to 26 form the signal peptide; the sequence is MSASKIPLFKMKDLILILCLLEMSFA. Hydroxyproline is present on Pro-37. Residue Ser-43 is modified to Phosphoserine. Residue Ser-112 is glycosylated (O-linked (GalNAc...) serine). Disordered stretches follow at residues 165-211, 307-338, and 353-383; these read QQVA…DFAD, DSPVAATKGPENEEGGAQGSPMPEANPDNLEN, and LLALPKDDIPGLPRSPSGKMKGLPSVTPAAA. 2 tandem repeats follow at residues 189-201 and 202-214.

Belongs to the ameloblastin family. As to expression, ameloblast-specific. Located at the Tomes processes of secretory ameloblasts and in the sheath space between rod-interrod enamel.

Its subcellular location is the secreted. The protein resides in the extracellular space. It localises to the extracellular matrix. In terms of biological role, involved in the mineralization and structural organization of enamel. This is Ameloblastin (AMBN) from Homo sapiens (Human).